The following is a 435-amino-acid chain: ATP-dependent RNA helicase RhlB (435 aa).

The Q motif motif lies at 9-37; that stretch reads QKFADFSLQTEIKTALNESGFEYCTPIQA. The 180-residue stretch at 40-219 folds into the Helicase ATP-binding domain; sequence LPILLQKKDI…YDHMNEPEKV (180 aa). 53 to 60 is a binding site for ATP; sequence AQTGTGKT. A DEAD box motif is present at residues 165–168; sequence DEAD. Residues 243–390 form the Helicase C-terminal domain; the sequence is KMRLLLTLLE…VTNYDSEALL (148 aa). A disordered region spans residues 395-435; the sequence is APVRVHRKHNSRPQGRSGSGGKPRSGNRNAPRRHDKTRRHS. Residues 424-435 are compositionally biased toward basic residues; it reads APRRHDKTRRHS.

Belongs to the DEAD box helicase family. RhlB subfamily. Component of the RNA degradosome, which is a multiprotein complex involved in RNA processing and mRNA degradation.

Its subcellular location is the cytoplasm. It catalyses the reaction ATP + H2O = ADP + phosphate + H(+). DEAD-box RNA helicase involved in RNA degradation. Has RNA-dependent ATPase activity and unwinds double-stranded RNA. The chain is ATP-dependent RNA helicase RhlB from Shewanella sediminis (strain HAW-EB3).